Here is a 284-residue protein sequence, read N- to C-terminus: Cysteine-rich repeat secretory protein 8 (284 aa).

Residues 1 to 27 (MATFIRFTAPLFCFFFLFSLFSHQTMS) form the signal peptide. Gnk2-homologous domains lie at 32–136 (MATF…NVSF) and 151–259 (SLAT…TTGL).

It belongs to the cysteine-rich repeat secretory protein family.

Its subcellular location is the secreted. This Arabidopsis thaliana (Mouse-ear cress) protein is Cysteine-rich repeat secretory protein 8 (CRRSP8).